We begin with the raw amino-acid sequence, 366 residues long: Chorismate synthase (366 aa).

Residue Arg46 coordinates NADP(+). FMN contacts are provided by residues 122 to 124 (RSS), 243 to 244 (NG), Gly284, 299 to 303 (KPTPS), and Arg325.

This sequence belongs to the chorismate synthase family. In terms of assembly, homotetramer. FMNH2 serves as cofactor.

It catalyses the reaction 5-O-(1-carboxyvinyl)-3-phosphoshikimate = chorismate + phosphate. It participates in metabolic intermediate biosynthesis; chorismate biosynthesis; chorismate from D-erythrose 4-phosphate and phosphoenolpyruvate: step 7/7. Functionally, catalyzes the anti-1,4-elimination of the C-3 phosphate and the C-6 proR hydrogen from 5-enolpyruvylshikimate-3-phosphate (EPSP) to yield chorismate, which is the branch point compound that serves as the starting substrate for the three terminal pathways of aromatic amino acid biosynthesis. This reaction introduces a second double bond into the aromatic ring system. The protein is Chorismate synthase of Campylobacter hominis (strain ATCC BAA-381 / DSM 21671 / CCUG 45161 / LMG 19568 / NCTC 13146 / CH001A).